The primary structure comprises 173 residues: Putative MgpC-like protein MPN_092 (173 aa).

Belongs to the MgpC family.

The chain is Putative MgpC-like protein MPN_092 from Mycoplasma pneumoniae (strain ATCC 29342 / M129 / Subtype 1) (Mycoplasmoides pneumoniae).